The sequence spans 363 residues: Protein arginine N-methyltransferase 2 (363 aa).

ANK repeat units follow at residues 22–46 and 48–80; these read AAQTAAPSVLADLLAEGAPAWFQDD and LGWSCLHYAAERKEPECLEVLLQGGAVWNAVDK. The region spanning 111-363 is the RMT2 domain; sequence KTSAGDNLVF…RLPIAKMSLI (253 aa). S-adenosyl-L-methionine contacts are provided by residues Phe120, 186 to 191, 209 to 211, 236 to 237, and Asp265; these read FGLGIV, EAH, and WQ.

It belongs to the class I-like SAM-binding methyltransferase superfamily. RMT2 methyltransferase family. In terms of assembly, monomer.

The protein resides in the cytoplasm. It is found in the nucleus. Its function is as follows. S-adenosyl-L-methionine-dependent protein-arginine N-methyltransferase that methylates the delta-nitrogen atom of arginine residues to form N5-methylarginine (type IV) in target proteins. Monomethylates ribosomal protein L12. The sequence is that of Protein arginine N-methyltransferase 2 from Cryptococcus neoformans var. neoformans serotype D (strain B-3501A) (Filobasidiella neoformans).